A 463-amino-acid chain; its full sequence is Quinolone resistance protein NorB (463 aa).

The next 14 membrane-spanning stretches (helical) occupy residues I17–V37, I53–A73, I86–I106, I107–I127, Y142–A162, L165–I185, F201–T221, S230–L250, T273–V293, Y299–I319, P334–L354, I357–Y377, M403–V423, and I435–V455.

Belongs to the major facilitator superfamily. TCR/Tet family.

It is found in the cell membrane. In terms of biological role, multidrug efflux pump that acts independently of NorA and is one of the factors that confers resistance against diverse quinolones and chemical compounds. Can facilitate bacterial survival in vivo when overexpressed in an abscess and may contribute to the relative resistance of staphylococcal abscesses to antimicrobial therapy. The protein is Quinolone resistance protein NorB (norB) of Staphylococcus aureus (strain MW2).